The chain runs to 255 residues: ParA family protein CT_582 (255 aa).

The protein belongs to the ParA family.

The polypeptide is ParA family protein CT_582 (Chlamydia trachomatis serovar D (strain ATCC VR-885 / DSM 19411 / UW-3/Cx)).